Here is a 55-residue protein sequence, read N- to C-terminus: Large ribosomal subunit protein bL33 (55 aa).

This sequence belongs to the bacterial ribosomal protein bL33 family.

The chain is Large ribosomal subunit protein bL33 from Methylacidiphilum infernorum (isolate V4) (Methylokorus infernorum (strain V4)).